The sequence spans 249 residues: tRNA (guanine-N(1)-)-methyltransferase (249 aa).

Residues glycine 113 and 133–138 (IGDFVL) each bind S-adenosyl-L-methionine.

Belongs to the RNA methyltransferase TrmD family. As to quaternary structure, homodimer.

It localises to the cytoplasm. It carries out the reaction guanosine(37) in tRNA + S-adenosyl-L-methionine = N(1)-methylguanosine(37) in tRNA + S-adenosyl-L-homocysteine + H(+). In terms of biological role, specifically methylates guanosine-37 in various tRNAs. The protein is tRNA (guanine-N(1)-)-methyltransferase of Aliivibrio fischeri (strain ATCC 700601 / ES114) (Vibrio fischeri).